Reading from the N-terminus, the 578-residue chain is Membrane protein insertase YidC (578 aa).

Residues Ile-3–Trp-23 form a helical membrane-spanning segment. The interval Ala-34–Ala-71 is disordered. Over residues Ala-37 to Ala-65 the composition is skewed to polar residues. 5 helical membrane-spanning segments follow: residues Leu-361 to Leu-381, Leu-387 to Phe-407, Leu-457 to Leu-477, Pro-500 to Pro-520, and Pro-535 to Val-555.

The protein belongs to the OXA1/ALB3/YidC family. Type 1 subfamily. Interacts with the Sec translocase complex via SecD. Specifically interacts with transmembrane segments of nascent integral membrane proteins during membrane integration.

It is found in the cell inner membrane. Functionally, required for the insertion and/or proper folding and/or complex formation of integral membrane proteins into the membrane. Involved in integration of membrane proteins that insert both dependently and independently of the Sec translocase complex, as well as at least some lipoproteins. Aids folding of multispanning membrane proteins. The polypeptide is Membrane protein insertase YidC (Pseudomonas paraeruginosa (strain DSM 24068 / PA7) (Pseudomonas aeruginosa (strain PA7))).